A 1293-amino-acid chain; its full sequence is Period circadian protein homolog 1 (1293 aa).

Positions 1–134 (MSGPLEGADG…SSEQSARART (134 aa)) are disordered. The interaction with BTRC stretch occupies residues 1–151 (MSGPLEGADG…LRELKLRLPP (151 aa)). 2 stretches are compositionally biased toward low complexity: residues 48–57 (NSNGSSGNES) and 64–115 (GASQ…ASSE). Positions 116-132 (QDNPSTSGCSSEQSARA) are enriched in polar residues. At Thr-121 the chain carries Phosphothreonine; by CSNK1E. Phosphoserine; by CSNK1E occurs at positions 122 and 126. Residues 138-147 (LMTALRELKL) carry the Nuclear export signal 1 motif. PAS domains are found at residues 208–275 (ITSE…PSRL) and 348–414 (YEAP…KILQ). One can recognise a PAC domain in the interval 422 to 465 (HSPIRFCARNGEYVTMDTSWAGFVHPWSRKVAFVLGRHKVRTAP). The Nuclear export signal 2 signature appears at 489–498 (LSEQIHRLLL). 2 disordered regions span residues 509–544 (LCGVGPLMSPGPLHSPGSSSDSNGGDAEGPGPPAPV) and 647–697 (TKRK…KEPV). Composition is skewed to low complexity over residues 513 to 533 (GPLMSPGPLHSPGSSSDSNGG) and 652 to 661 (ASSSCTASSA). The required for phosphorylation by CSNK1E stretch occupies residues 596 to 814 (ELEVAPAPDQ…GLDTSSVAPS (219 aa)). Phosphoserine occurs at positions 660, 662, and 703. 4 disordered regions span residues 748–771 (GLAPGPAPSPAPSPTVAPDPAPDA), 808–870 (TSSV…PPAT), 935–1094 (SQAP…SKYF), and 1204–1293 (SVQD…NGTS). Pro residues predominate over residues 750–768 (APGPAPSPAPSPTVAPDPA). Ser-814 carries the post-translational modification Phosphoserine. The short motif at 823–839 (IPSGRRHHCRSKAKRSR) is the Nuclear localization signal element. Positions 826-843 (GRRHHCRSKAKRSRHHQT) are enriched in basic residues. Composition is skewed to pro residues over residues 856–870 (SPVPSSGPWPPPPAT) and 952–962 (PSLPPPPPSPP). Positions 969-982 (LFNSRCSSPLQLNL) are enriched in polar residues. Ser-975 and Ser-976 each carry phosphoserine. The Nuclear export signal 3 motif lies at 978–985 (LQLNLLQL). The span at 1032–1058 (LSGSSDLLELLLQEDSRSGTGSAASGS) shows a compositional bias: low complexity. The LXXLL motif lies at 1039–1043 (LELLL). Residues 1059–1073 (LGSGLGSGSGSGSHE) show a composition bias toward gly residues. Low complexity predominate over residues 1074–1091 (GGSTSASITRSSQSSHTS). The interval 1145-1293 (SRDAASVLKQ…ALPAEENGTS (149 aa)) is CRY binding domain. Residues 1232–1250 (GEGGGVGGGGGGVGGGGGD) show a composition bias toward gly residues. A compositionally biased stretch (polar residues) spans 1255–1269 (AQTQIGTKGSSSQDS).

Homodimer. Component of the circadian core oscillator, which includes the CRY proteins, CLOCK or NPAS2, BMAL1 or BMAL2, CSNK1D and/or CSNK1E, TIMELESS, and the PER proteins. Interacts directly with TIMELESS, PER2, PER3, CRY1 and CRY2. Interacts with BMAL1 and CLOCK. Interacts with GPRASP1. Interacts (phosphorylated) with BTRC and FBXW11; the interactions trigger proteasomal degradation. Interacts with NONO and WDR5. Interacts with SFPQ. Interacts with USP2. Interacts with HNF4A. Phosphorylated on serine residues by CSNK1D, CSNK1E and probably also by CSNK1G2. Phosphorylation by CSNK1D or CSNK1E promotes nuclear location of PER proteins as well as ubiquitination and subsequent degradation. May be dephosphorylated by PP1. Post-translationally, ubiquitinated; requires phosphorylation by CSNK1E and interaction with BTRC and FBXW11. Deubiquitinated by USP2. As to expression, expressed in pancreas. In the CNS, highly expressed in the SCN, internal granular layer of granular cells of the olfactory bulb, tuberculum olfactorium, piriform cortex, gyrus dentatus of the hippocampus, cerebellum, pars tuberalis/median eminence, and pituitary, and moderately in the tenia tecta, caudate putamen, accumbens nucleus, spinal cord, superior and inferior colliculus and pineal gland.

It is found in the nucleus. The protein localises to the cytoplasm. Its function is as follows. Transcriptional repressor which forms a core component of the circadian clock. The circadian clock, an internal time-keeping system, regulates various physiological processes through the generation of approximately 24 hour circadian rhythms in gene expression, which are translated into rhythms in metabolism and behavior. It is derived from the Latin roots 'circa' (about) and 'diem' (day) and acts as an important regulator of a wide array of physiological functions including metabolism, sleep, body temperature, blood pressure, endocrine, immune, cardiovascular, and renal function. Consists of two major components: the central clock, residing in the suprachiasmatic nucleus (SCN) of the brain, and the peripheral clocks that are present in nearly every tissue and organ system. Both the central and peripheral clocks can be reset by environmental cues, also known as Zeitgebers (German for 'timegivers'). The predominant Zeitgeber for the central clock is light, which is sensed by retina and signals directly to the SCN. The central clock entrains the peripheral clocks through neuronal and hormonal signals, body temperature and feeding-related cues, aligning all clocks with the external light/dark cycle. Circadian rhythms allow an organism to achieve temporal homeostasis with its environment at the molecular level by regulating gene expression to create a peak of protein expression once every 24 hours to control when a particular physiological process is most active with respect to the solar day. Transcription and translation of core clock components (CLOCK, NPAS2, BMAL1, BMAL2, PER1, PER2, PER3, CRY1 and CRY2) plays a critical role in rhythm generation, whereas delays imposed by post-translational modifications (PTMs) are important for determining the period (tau) of the rhythms (tau refers to the period of a rhythm and is the length, in time, of one complete cycle). A diurnal rhythm is synchronized with the day/night cycle, while the ultradian and infradian rhythms have a period shorter and longer than 24 hours, respectively. Disruptions in the circadian rhythms contribute to the pathology of cardiovascular diseases, cancer, metabolic syndromes and aging. A transcription/translation feedback loop (TTFL) forms the core of the molecular circadian clock mechanism. Transcription factors, CLOCK or NPAS2 and BMAL1 or BMAL2, form the positive limb of the feedback loop, act in the form of a heterodimer and activate the transcription of core clock genes and clock-controlled genes (involved in key metabolic processes), harboring E-box elements (5'-CACGTG-3') within their promoters. The core clock genes: PER1/2/3 and CRY1/2 which are transcriptional repressors form the negative limb of the feedback loop and interact with the CLOCK|NPAS2-BMAL1|BMAL2 heterodimer inhibiting its activity and thereby negatively regulating their own expression. This heterodimer also activates nuclear receptors NR1D1/2 and RORA/B/G, which form a second feedback loop and which activate and repress BMAL1 transcription, respectively. Regulates circadian target genes expression at post-transcriptional levels, but may not be required for the repression at transcriptional level. Controls PER2 protein decay. Represses CRY2 preventing its repression on CLOCK/BMAL1 target genes such as FXYD5 and SCNN1A in kidney and PPARA in liver. Besides its involvement in the maintenance of the circadian clock, has an important function in the regulation of several processes. Participates in the repression of glucocorticoid receptor NR3C1/GR-induced transcriptional activity by reducing the association of NR3C1/GR to glucocorticoid response elements (GREs) by BMAL1:CLOCK. Plays a role in the modulation of the neuroinflammatory state via the regulation of inflammatory mediators release, such as CCL2 and IL6. In spinal astrocytes, negatively regulates the MAPK14/p38 and MAPK8/JNK MAPK cascades as well as the subsequent activation of NFkappaB. Coordinately regulates the expression of multiple genes that are involved in the regulation of renal sodium reabsorption. Can act as gene expression activator in a gene and tissue specific manner, in kidney enhances WNK1 and SLC12A3 expression in collaboration with CLOCK. Modulates hair follicle cycling. Represses the CLOCK-BMAL1 induced transcription of BHLHE40/DEC1. This Rattus norvegicus (Rat) protein is Period circadian protein homolog 1.